We begin with the raw amino-acid sequence, 89 residues long: Neuropeptide S (89 aa).

A signal peptide spans 1-23; the sequence is MIGSLKLSFVLALSLSVMHVLWC. A propeptide spanning residues 24 to 69 is cleaved from the precursor; the sequence is YPVLSSKVPGKPDYFLILLSSCPARLEGSDRLAFLKPILEKTSMKR.

It localises to the secreted. Its function is as follows. May play an important anorexigenic role. Modulates arousal and anxiety as well as increases locomotor activity. Binds to its receptor NPSR1 with nanomolar affinity to increase intracellular calcium concentrations. This chain is Neuropeptide S (Nps), found in Mus musculus (Mouse).